The primary structure comprises 173 residues: Photosystem I assembly protein Ycf3 (173 aa).

TPR repeat units follow at residues 35-68 (AFVY…EEDT), 72-105 (GYIL…NPRL), and 120-153 (GEKE…APNN).

It belongs to the Ycf3 family.

It localises to the cellular thylakoid membrane. In terms of biological role, essential for the assembly of the photosystem I (PSI) complex. May act as a chaperone-like factor to guide the assembly of the PSI subunits. This Nostoc punctiforme (strain ATCC 29133 / PCC 73102) protein is Photosystem I assembly protein Ycf3.